Consider the following 212-residue polypeptide: Adenylate kinase (212 aa).

10 to 15 (GAGKGT) contributes to the ATP binding site. The segment at 30 to 59 (STGDMFRAAMANQTEMGVLAKSYIDKGELV) is NMP. Residues T31, R36, 57–59 (ELV), 86–89 (GYPR), and Q93 contribute to the AMP site. The segment at 127–159 (GRIIHRQTGETFHKVFNPPANYNEEDYYQREDD) is LID. Residues R128 and 137–138 (TF) each bind ATP. R156 and R167 together coordinate AMP. Q195 contributes to the ATP binding site.

It belongs to the adenylate kinase family. As to quaternary structure, monomer.

Its subcellular location is the cytoplasm. It catalyses the reaction AMP + ATP = 2 ADP. It functions in the pathway purine metabolism; AMP biosynthesis via salvage pathway; AMP from ADP: step 1/1. Catalyzes the reversible transfer of the terminal phosphate group between ATP and AMP. Plays an important role in cellular energy homeostasis and in adenine nucleotide metabolism. The polypeptide is Adenylate kinase (Streptococcus gordonii (strain Challis / ATCC 35105 / BCRC 15272 / CH1 / DL1 / V288)).